Consider the following 734-residue polypeptide: MAEQKSSNGGGGGGDVVINVPVEEASRRSKEMASPESEKGVPFSKSPSPEISKLVGSPNKPPRAPNQNNVGLTQRKSFARSVYSKPKSRFVDPSCPVDTSILEEEVREQLGAGFSFSRASPNNKSNRSVGSPAPVTPSKVVVEKDEDEEIYKKVKLNREMRSKISTLALIESAFFVVILSALVASLTINVLKHHTFWGLEVWKWCVLVMVIFSGMLVTNWFMRLIVFLIETNFLLRRKVLYFVHGLKKSVQVFIWLCLILVAWILLFNHDVKRSPAATKVLKCITRTLISILTGAFFWLVKTLLLKILAANFNVNNFFDRIQDSVFHQYVLQTLSGLPLMEEAERVGREPSTGHLSFATVVKKGTVKEKKVIDMGKVHKMKREKVSAWTMRVLMEAVRTSGLSTISDTLDETAYGEGKEQADREITSEMEALAAAYHVFRNVAQPFFNYIEEEDLLRFMIKEEVDLVFPLFDGAAETGRITRKAFTEWVVKVYTSRRALAHSLNDTKTAVKQLNKLVTAILMVVTVVIWLLLLEVATTKVLLFFSTQLVALAFIIGSTCKNLFESIVFVFVMHPYDVGDRCVVDGVAMLVEEMNLLTTVFLKLNNEKVYYPNAVLATKPISNYFRSPNMGETVEFSISFSTPVSKIAHLKERIAEYLEQNPQHWAPVHSVVVKEIENMNKLKMALYSDHTITFQENRERNLRRTELSLAIKRMLEDLHIDYTLLPQDINLTKKN.

Disordered stretches follow at residues 1–75 and 115–136; these read MAEQ…LTQR and SFSR…APVT. Positions 24–39 are enriched in basic and acidic residues; the sequence is EASRRSKEMASPESEK. Ser34 bears the Phosphoserine mark. 2 stretches are compositionally biased toward polar residues: residues 65–75 and 117–129; these read PNQNNVGLTQR and SRAS…NRSV. A phosphoserine mark is found at Ser128 and Ser131. Helical transmembrane passes span 164–184, 196–216, 249–269, 288–308, 516–536, and 551–571; these read ISTL…ALVA, FWGL…SGML, SVQV…LFNH, LISI…LKIL, LVTA…LEVA, and LAFI…FVFV.

This sequence belongs to the MscS (TC 1.A.23) family. Detected in the root tip and throughout the vasculature of the root and leaf.

It is found in the cell membrane. Functionally, mechanosensitive channel that opens in response to stretch forces in the membrane lipid bilayer. The chain is Mechanosensitive ion channel protein 10 (MSL10) from Arabidopsis thaliana (Mouse-ear cress).